A 156-amino-acid chain; its full sequence is MTVININEIMTHLLPGQTIAGLDLGTKTIGIAISDMGLTVSNPRPVLQRKKFTEDAHRLIKIFDHENVGVIVIGLPLNMNGSSGSRVQATRAFVSNMKAYTKIPFVFWDERLSTIAAERSLLEMNVSRIKRARRIDSAAAAFILQGALNRIENLHS.

The protein belongs to the YqgF nuclease family.

The protein resides in the cytoplasm. In terms of biological role, could be a nuclease involved in processing of the 5'-end of pre-16S rRNA. The protein is Putative pre-16S rRNA nuclease of Bartonella tribocorum (strain CIP 105476 / IBS 506).